Here is a 146-residue protein sequence, read N- to C-terminus: Large ribosomal subunit protein uL15 (146 aa).

The tract at residues 1–56 is disordered; that stretch reads MSDIQLNTLKPAEGSKHAKRRVGRGIGSGLGKTAGRGHKGQKSRSGGFHKVGFEGG. The segment covering 24–34 has biased composition (gly residues); sequence RGIGSGLGKTA.

The protein belongs to the universal ribosomal protein uL15 family. In terms of assembly, part of the 50S ribosomal subunit.

In terms of biological role, binds to the 23S rRNA. The protein is Large ribosomal subunit protein uL15 of Bordetella bronchiseptica (strain ATCC BAA-588 / NCTC 13252 / RB50) (Alcaligenes bronchisepticus).